The following is a 189-amino-acid chain: Peptidyl-tRNA hydrolase (189 aa).

H14 is a tRNA binding site. The active-site Proton acceptor is the H19. TRNA-binding residues include Y64, N66, and N112.

The protein belongs to the PTH family. In terms of assembly, monomer.

Its subcellular location is the cytoplasm. It carries out the reaction an N-acyl-L-alpha-aminoacyl-tRNA + H2O = an N-acyl-L-amino acid + a tRNA + H(+). Its function is as follows. Hydrolyzes ribosome-free peptidyl-tRNAs (with 1 or more amino acids incorporated), which drop off the ribosome during protein synthesis, or as a result of ribosome stalling. In terms of biological role, catalyzes the release of premature peptidyl moieties from peptidyl-tRNA molecules trapped in stalled 50S ribosomal subunits, and thus maintains levels of free tRNAs and 50S ribosomes. This is Peptidyl-tRNA hydrolase from Chlorobium phaeobacteroides (strain BS1).